Consider the following 1639-residue polypeptide: RIMS-binding protein 3B (1639 aa).

Disordered stretches follow at residues 1-22 (MAKDSPSPLGASPKKPGCSSPA), 215-240 (GSPDPQAVHSLEEPLPQTSSGSCHAP), and 295-364 (SLDS…LTPS). Positions 21–143 (PAAAVLENQR…ELQRQLAEEL (123 aa)) form a coiled coil. The segment covering 326-339 (SPPPSPLPPPPPPS) has biased composition (pro residues). Coiled-coil stretches lie at residues 409-442 (QADEKVKRLKVKRAELTGLARRLADRARELQETN) and 480-619 (LAKD…AEEN). The interval 697 to 811 (CRPGHPPEQP…DRDTASEVDD (115 aa)) is disordered. Composition is skewed to polar residues over residues 707-718 (WETSQMPESQVK) and 761-775 (SVPQVSETVPASQPL). Positions 776 to 790 (SKKTSSQSNSSSEGS) are enriched in low complexity. Residues 832–899 (PKLKIFMAQY…PSNFVEQIPD (68 aa)) enclose the SH3 1 domain. Fibronectin type-III domains are found at residues 995–1083 (APMQ…TLLA) and 1088–1184 (PPLE…IPED). Disordered stretches follow at residues 1251–1273 (PRRQSPVSNLGSEGECPSSGAGS), 1292–1325 (QKSPQNHRPPSVSDQPGEKENCYQHMGTSKSPAP), and 1392–1413 (GTERREERREPEPHSRQGQALG). Residues 1293 to 1305 (KSPQNHRPPSVSD) show a composition bias toward polar residues. The span at 1392-1406 (GTERREERREPEPHS) shows a compositional bias: basic and acidic residues. SH3 domains follow at residues 1452-1520 (TPAR…EMEV) and 1569-1636 (WTPK…HMSL).

The protein belongs to the RIMBP family. Interacts with LRGUK (via guanylate kinase-like domain). Interacts (via C-terminus) with HOOK1 (via coiled-coil region).

The protein localises to the cytoplasm. Its subcellular location is the cytoskeleton. In terms of biological role, probable component of the manchette, a microtubule-based structure which plays a key role in sperm head morphogenesis during late stages of sperm development. The sequence is that of RIMS-binding protein 3B (RIMBP3B) from Homo sapiens (Human).